The following is a 407-amino-acid chain: Magnesium-protoporphyrin IX monomethyl ester [oxidative] cyclase 1, chloroplastic (407 aa).

The span at 1–10 (MQTTLKQQRA) shows a compositional bias: polar residues. The interval 1-28 (MQTTLKQQRASGRVSARQPFRSAAVARP) is disordered.

The protein belongs to the AcsF family. Fe cation is required as a cofactor.

The protein resides in the plastid. It localises to the chloroplast thylakoid membrane. It catalyses the reaction Mg-protoporphyrin IX 13-monomethyl ester + 3 NADPH + 3 O2 + 2 H(+) = 3,8-divinyl protochlorophyllide a + 3 NADP(+) + 5 H2O. The protein operates within porphyrin-containing compound metabolism; chlorophyll biosynthesis. Catalyzes the formation of the isocyclic ring in chlorophyll biosynthesis under oxygen- and copper-deficient conditions. Mediates the cyclase reaction, which results in the formation of divinylprotochlorophyllide (Pchlide) characteristic of all chlorophylls from magnesium-protoporphyrin IX 13-monomethyl ester (MgPMME). The chain is Magnesium-protoporphyrin IX monomethyl ester [oxidative] cyclase 1, chloroplastic (CRD1) from Chlamydomonas reinhardtii (Chlamydomonas smithii).